Here is a 646-residue protein sequence, read N- to C-terminus: ATP-dependent zinc metalloprotease FtsH (646 aa).

Positions 1–27 are disordered; that stretch reads MTNNQTDRPRPPGPESRRFDNNDKNNR. The Cytoplasmic portion of the chain corresponds to 1–35; the sequence is MTNNQTDRPRPPGPESRRFDNNDKNNRNRWGPIPS. Basic and acidic residues predominate over residues 7–26; that stretch reads DRPRPPGPESRRFDNNDKNN. Residues 36–56 form a helical membrane-spanning segment; the sequence is WAWIVLIVALLLNWLVAPILF. Residues 57–144 are Extracellular-facing; sequence PEGKGAVSIP…QPESSTRSLL (88 aa). A helical membrane pass occupies residues 145–165; it reads LSILISFGPTILFFLLFLWLI. The Cytoplasmic portion of the chain corresponds to 166-646; it reads SKAQSSQQGL…GLGEKQPEPA (481 aa). An ATP-binding site is contributed by 237–244; it reads GPPGTGKT. Residue His459 participates in Zn(2+) binding. Residue Glu460 is part of the active site. Zn(2+) is bound by residues His463 and Asp535.

In the central section; belongs to the AAA ATPase family. This sequence in the C-terminal section; belongs to the peptidase M41 family. As to quaternary structure, homohexamer. Requires Zn(2+) as cofactor.

It is found in the cell membrane. In terms of biological role, acts as a processive, ATP-dependent zinc metallopeptidase for both cytoplasmic and membrane proteins. Plays a role in the quality control of integral membrane proteins. The sequence is that of ATP-dependent zinc metalloprotease FtsH from Thermobaculum terrenum (strain ATCC BAA-798 / CCMEE 7001 / YNP1).